The primary structure comprises 640 residues: tRNA-dihydrouridine(47) synthase [NAD(P)(+)]-like (640 aa).

Residues M1–E10 are compositionally biased toward low complexity. 2 disordered regions span residues M1 to C22 and D47 to K106. A2 is subject to N-acetylalanine. A compositionally biased stretch (basic and acidic residues) spans P64–V91. Positions P92 to K106 are enriched in basic residues. 2 C3H1-type zinc fingers span residues Y110 to G140 and A148 to P178. S267 is subject to Phosphoserine. FMN is bound by residues P301 to T303 and Q355. C386 (proton donor) is an active-site residue. K406 participates in a covalent cross-link: Glycyl lysine isopeptide (Lys-Gly) (interchain with G-Cter in SUMO2). FMN contacts are provided by residues K425, H455, N487–D489, and A510–R511.

Belongs to the Dus family. Dus3 subfamily. The cofactor is FMN.

It carries out the reaction 5,6-dihydrouridine(47) in tRNA + NAD(+) = uridine(47) in tRNA + NADH + H(+). The catalysed reaction is 5,6-dihydrouridine(47) in tRNA + NADP(+) = uridine(47) in tRNA + NADPH + H(+). It catalyses the reaction a 5,6-dihydrouridine in mRNA + NAD(+) = a uridine in mRNA + NADH + H(+). The enzyme catalyses a 5,6-dihydrouridine in mRNA + NADP(+) = a uridine in mRNA + NADPH + H(+). Functionally, catalyzes the synthesis of dihydrouridine, a modified base, in various RNAs, such as tRNAs, mRNAs and some long non-coding RNAs (lncRNAs). Mainly modifies the uridine in position 47 (U47) in the D-loop of most cytoplasmic tRNAs. Also able to mediate the formation of dihydrouridine in some mRNAs, thereby regulating their translation. This is tRNA-dihydrouridine(47) synthase [NAD(P)(+)]-like from Rattus norvegicus (Rat).